The sequence spans 358 residues: Peptide chain release factor 1 (358 aa).

Q233 is modified (N5-methylglutamine).

Belongs to the prokaryotic/mitochondrial release factor family. Post-translationally, methylated by PrmC. Methylation increases the termination efficiency of RF1.

The protein localises to the cytoplasm. In terms of biological role, peptide chain release factor 1 directs the termination of translation in response to the peptide chain termination codons UAG and UAA. The polypeptide is Peptide chain release factor 1 (Beijerinckia indica subsp. indica (strain ATCC 9039 / DSM 1715 / NCIMB 8712)).